Here is a 226-residue protein sequence, read N- to C-terminus: TPD1 protein homolog 1A (226 aa).

The first 35 residues, 1 to 35 (MRVSSASSTPPPPAFAAAAWAVVLLAMLRSDVALA), serve as a signal peptide directing secretion.

As to quaternary structure, interacts with MSP1. In terms of tissue distribution, expressed in roots, and anthers and ovules during meiosis.

In terms of biological role, involved in cell specification during anther development. Required for the differentiation of primary parietal cells into secondary parietal cells in anthers. May serve as an extracellular ligand for the MSP1 receptor kinase to limit sporocyte number in ovules. This Oryza sativa subsp. japonica (Rice) protein is TPD1 protein homolog 1A.